The sequence spans 127 residues: Small ribosomal subunit protein uS11 (127 aa).

The protein belongs to the universal ribosomal protein uS11 family. Part of the 30S ribosomal subunit. Interacts with proteins S7 and S18. Binds to IF-3.

Located on the platform of the 30S subunit, it bridges several disparate RNA helices of the 16S rRNA. Forms part of the Shine-Dalgarno cleft in the 70S ribosome. This is Small ribosomal subunit protein uS11 from Streptococcus suis (strain 98HAH33).